Here is a 474-residue protein sequence, read N- to C-terminus: AAA-ATPase At3g28610 (474 aa).

The N-terminal stretch at 1-25 is a signal peptide; that stretch reads MMGNMFGSSLASLFFLWATIQQIFP. Residue 244–251 participates in ATP binding; that stretch reads GPPGTGKS.

Belongs to the AAA ATPase family. BCS1 subfamily. Requires Mg(2+) as cofactor.

The catalysed reaction is ATP + H2O = ADP + phosphate + H(+). In Arabidopsis thaliana (Mouse-ear cress), this protein is AAA-ATPase At3g28610.